The sequence spans 71 residues: VLIIAVLFLAASELVTADYTRDEWQYRAASLRDAMRNFRDTRCSPGGEVCTRHSPCCTGFLCNHIGGMCHH.

The signal sequence occupies residues 1-17 (VLIIAVLFLAASELVTA). A propeptide spanning residues 18–42 (DYTRDEWQYRAASLRDAMRNFRDTR) is cleaved from the precursor. 3 disulfide bridges follow: Cys-43–Cys-57, Cys-50–Cys-62, and Cys-56–Cys-69.

Belongs to the conotoxin O1 superfamily. Expressed by the venom duct.

It localises to the secreted. This is Conotoxin LvVIIB from Conus lividus (Livid cone).